The primary structure comprises 466 residues: Asparagine--tRNA ligase (466 aa).

The protein belongs to the class-II aminoacyl-tRNA synthetase family. In terms of assembly, homodimer.

It is found in the cytoplasm. It catalyses the reaction tRNA(Asn) + L-asparagine + ATP = L-asparaginyl-tRNA(Asn) + AMP + diphosphate + H(+). This is Asparagine--tRNA ligase from Shewanella oneidensis (strain ATCC 700550 / JCM 31522 / CIP 106686 / LMG 19005 / NCIMB 14063 / MR-1).